Here is a 199-residue protein sequence, read N- to C-terminus: MSGAELIIQEINREAERKIEYILNEAREEAEKIKEEAKRRAESKAEWILRRAKTQAELEKQRIIANARLEVRRKRLAVQEEIIRNVLDEVRKRLQEMPEEEYFESIKALLKEAVEELKEGKVRVYSNERTLALISSRIEEIRDYLGSISIEIGSAISTMGGVIVETEDGRIRIDNTFEARMERFEGEIRAKIAKVLFGG.

This sequence belongs to the V-ATPase E subunit family. Has multiple subunits with at least A(3), B(3), C, D, E, F, H, I and proteolipid K(x).

Its subcellular location is the cell membrane. Functionally, component of the A-type ATP synthase that produces ATP from ADP in the presence of a proton gradient across the membrane. The protein is A-type ATP synthase subunit E of Pyrococcus abyssi (strain GE5 / Orsay).